The following is a 192-amino-acid chain: ATP synthase subunit b 2 (192 aa).

The helical transmembrane segment at Ser39–Met59 threads the bilayer.

This sequence belongs to the ATPase B chain family. In terms of assembly, F-type ATPases have 2 components, F(1) - the catalytic core - and F(0) - the membrane proton channel. F(1) has five subunits: alpha(3), beta(3), gamma(1), delta(1), epsilon(1). F(0) has three main subunits: a(1), b(2) and c(10-14). The alpha and beta chains form an alternating ring which encloses part of the gamma chain. F(1) is attached to F(0) by a central stalk formed by the gamma and epsilon chains, while a peripheral stalk is formed by the delta and b chains.

The protein resides in the cell inner membrane. F(1)F(0) ATP synthase produces ATP from ADP in the presence of a proton or sodium gradient. F-type ATPases consist of two structural domains, F(1) containing the extramembraneous catalytic core and F(0) containing the membrane proton channel, linked together by a central stalk and a peripheral stalk. During catalysis, ATP synthesis in the catalytic domain of F(1) is coupled via a rotary mechanism of the central stalk subunits to proton translocation. Functionally, component of the F(0) channel, it forms part of the peripheral stalk, linking F(1) to F(0). The b'-subunit is a diverged and duplicated form of b found in plants and photosynthetic bacteria. This chain is ATP synthase subunit b 2 (atpF2), found in Methylobacterium radiotolerans (strain ATCC 27329 / DSM 1819 / JCM 2831 / NBRC 15690 / NCIMB 10815 / 0-1).